The following is a 102-amino-acid chain: Small integral membrane protein 29 (102 aa).

A glycan (N-linked (GlcNAc...) asparagine) is linked at Asn3. The chain crosses the membrane as a helical span at residues 21–41 (VLGPFFLITLVGVVVAVVMYV).

The protein localises to the membrane. This chain is Small integral membrane protein 29, found in Mus musculus (Mouse).